The chain runs to 434 residues: Perilipin-3 (434 aa).

The segment at 1–22 (MSADGAEADGSTQVTVEEPVQQ) is disordered. S2 is subject to N-acetylserine. A Phosphoserine modification is found at S31. Position 65 is an N6-acetyllysine (K65). S91 carries the post-translational modification Phosphoserine. A Glycyl lysine isopeptide (Lys-Gly) (interchain with G-Cter in SUMO1) cross-link involves residue K122. A phosphoserine mark is found at S130 and S148. T170 carries the post-translational modification Phosphothreonine. Residues S175 and S179 each carry the phosphoserine modification. T216 carries the phosphothreonine modification. 2 positions are modified to phosphoserine: S217 and S241. Y251 bears the Phosphotyrosine mark. Coiled coils occupy residues 252–277 (EHSL…QVLS) and 353–377 (TNVK…SSIH).

It belongs to the perilipin family. In terms of assembly, homooligomer. Interacts with M6PR (via the cytoplasmic domain). Interacts with IGF2R (via the cytoplasmic domain). May exist as a homodimer. In terms of processing, phosphorylation at Tyr-251 by isoform 1 of CHKA (CHKalpha2) promotes dissociation from lipid droplets: dissociation is followed by recruitment of autophagosome machinery to lipid droplets and subsequent lipid droplet lipolysis.

The protein resides in the lipid droplet. Its subcellular location is the endosome membrane. It is found in the cytoplasm. Its function is as follows. Structural component of lipid droplets, which is required for the formation and maintenance of lipid storage droplets. Required for the transport of mannose 6-phosphate receptors (MPR) from endosomes to the trans-Golgi network. The chain is Perilipin-3 (PLIN3) from Homo sapiens (Human).